The primary structure comprises 181 residues: Endoribonuclease YbeY (181 aa).

Residues histidine 140, histidine 144, and histidine 150 each coordinate Zn(2+).

The protein belongs to the endoribonuclease YbeY family. The cofactor is Zn(2+).

It is found in the cytoplasm. Functionally, single strand-specific metallo-endoribonuclease involved in late-stage 70S ribosome quality control and in maturation of the 3' terminus of the 16S rRNA. The polypeptide is Endoribonuclease YbeY (Dinoroseobacter shibae (strain DSM 16493 / NCIMB 14021 / DFL 12)).